The sequence spans 189 residues: MASYSMGDLKKGLKIELDGVPYKIVEYQHVKPGKGAAFVRVKIKSFVNGKVLEKTFHAGDKCESPNLVEKEMQYLYDDGEFCQFMDVESYEQVAISDEDIGEAKKWMIDGMMVQILFHNGKAIGVEVPQVVELKIVETQPNFKGDTQGSNKKPATLESGAVVQIPFHVLEGEVIRVDTVRGEYIERANK.

This sequence belongs to the elongation factor P family.

The protein resides in the cytoplasm. The protein operates within protein biosynthesis; polypeptide chain elongation. Functionally, involved in peptide bond synthesis. Stimulates efficient translation and peptide-bond synthesis on native or reconstituted 70S ribosomes in vitro. Probably functions indirectly by altering the affinity of the ribosome for aminoacyl-tRNA, thus increasing their reactivity as acceptors for peptidyl transferase. The protein is Elongation factor P of Campylobacter fetus subsp. fetus (strain 82-40).